Here is a 537-residue protein sequence, read N- to C-terminus: Putative cysteine ligase BshC (537 aa).

The stretch at 415-439 (EKASNNFINEVEEMKIQQQELYNNL) forms a coiled coil.

It belongs to the BshC family.

Functionally, involved in bacillithiol (BSH) biosynthesis. May catalyze the last step of the pathway, the addition of cysteine to glucosamine malate (GlcN-Mal) to generate BSH. The chain is Putative cysteine ligase BshC from Staphylococcus epidermidis (strain ATCC 12228 / FDA PCI 1200).